A 101-amino-acid chain; its full sequence is Small ribosomal subunit protein uS14 (101 aa).

This sequence belongs to the universal ribosomal protein uS14 family. As to quaternary structure, part of the 30S ribosomal subunit. Contacts proteins S3 and S10.

Binds 16S rRNA, required for the assembly of 30S particles and may also be responsible for determining the conformation of the 16S rRNA at the A site. This is Small ribosomal subunit protein uS14 from Pseudomonas aeruginosa (strain LESB58).